The following is a 565-amino-acid chain: Peptide transport periplasmic protein SapA (565 aa).

The first 23 residues, methionine 1–alanine 23, serve as a signal peptide directing secretion.

Belongs to the bacterial solute-binding protein 5 family.

The protein localises to the periplasm. Involved in a peptide intake transport system that plays a role in the resistance to antimicrobial peptides. In Haemophilus influenzae (strain ATCC 51907 / DSM 11121 / KW20 / Rd), this protein is Peptide transport periplasmic protein SapA (sapA).